A 535-amino-acid chain; its full sequence is T-complex protein 1 subunit epsilon (535 aa).

Belongs to the TCP-1 chaperonin family. Heterooligomeric complex of about 850 to 900 kDa that forms two stacked rings, 12 to 16 nm in diameter.

The protein localises to the cytoplasm. Molecular chaperone; assists the folding of proteins upon ATP hydrolysis. Known to play a role, in vitro, in the folding of actin and tubulin. In Avena sativa (Oat), this protein is T-complex protein 1 subunit epsilon.